The sequence spans 248 residues: PF03932 family protein CutC (248 aa).

The protein belongs to the CutC family. Homodimer.

Its subcellular location is the cytoplasm. This is PF03932 family protein CutC from Salmonella enteritidis PT4 (strain P125109).